The chain runs to 1084 residues: MLIFFFFFFFFKYIYNIFILTCFYITLSSYYFIISFIFSTLMFFYFCTFYVISLFFLYISSFCKSIKVTQLYDKKIKIKSFINNYLVSCRKKKYIYNNVDDKSNIGTFNLYHNIRDNNNNNNNNDNNNNLKKRDDVLFPLCNKNIINDVQKIYDEVNNIKDKEQKINYLMEQCSSLCKENYFPPILNLNKAYRNKRIDEFNKGNKNFYINEVGKNIWYKYVNRCDEILFMAIDIQIDEDEQRNNSIKDVHDVHDDNIKTCTLIKDDKHFEKYKDIHNDNILKNILPLDKKIDSIKNMLNHKYMKKKKCIITIDAYSNNLILYCFLYLILKHINKMYLYSFMNIQIKEITAKLKELFDLHFNVHHIIDYIHEYIYNFLMSYHIKRKKNKSKNMKEKDIKNVFANNIIISDEENKHISKESSDMYKKKTTITTTTTTKKKKNTMKLFTYPRIAHMLSGGVDSLMALHLLERKKFYVDNYFFNFTNADCSKNDIKYVKDICKNNKRNLFIININDEYFDEVLVPMLFFYADGKVPNPDIMCNQKIKYNFFLKVIKSIYKQKWNYRTKSKLCNYDFISTGHYAMIRTNDKNNPNNIFNNNLFIKKKKKKIKNIKNKKNIKNKNNIKNKNNNNNIYTYNIYNLHNDNIKTNYKKNNKYFYKLLVSNDKKKDQTFFLSSFNHIQLSKFIFPLSLYTKKDVKKYMNENNINNYNHKETKGLCLFGNIDMQTLLHKYFVNTEKDDIKNKQNEDNIFKENNILNLNNNFNQNEKKKKKEKKLLVDITTTSSHLKKFRETFIPKMNLHYKNYLINLDDQTILDINSDIHLYAIGQHKNVTNYLHNLYNKKMININGYKKKHVKNVISSFQWIVVYKKIKRDMSTNLIHNFIYLTKNYDQDLFTHIRTKCKLHNIKWIEGKLPACIKKQFKKYNKINKKKKKINNNNNKYKTNETFHVYNNIQESGKKKKKKKVKNIPHDEKTIFVKIRNSEQIKKAKIKFSLSNNTAYLKVKQKDTGFSPGQIITLYFPFIIKKNNKVTYITNLNKYNNLINTNKNTIYYHCLGSATISNQFLDYNLYQHIKNIHQINDLNMSK.

3 helical membrane-spanning segments follow: residues 1-21 (MLIF…FILT), 32-52 (FIIS…FYVI), and 309-329 (IITI…YLIL). C538 acts as the Nucleophile in catalysis. A disulfide bond links C538 and C715. The Cysteine persulfide intermediate role is filled by C715.

Belongs to the MnmA/TRMU family.

Its subcellular location is the plastid. It localises to the apicoplast. It is found in the membrane. It catalyses the reaction S-sulfanyl-L-cysteinyl-[protein] + uridine(34) in tRNA + AH2 + ATP = 2-thiouridine(34) in tRNA + L-cysteinyl-[protein] + A + AMP + diphosphate + H(+). Catalyzes the 2-thiolation of uridine at the wobble position (U34) of tRNA, leading to the formation of s(2)U34. Required for apicoplast maintenance. The protein is Putative tRNA-specific 2-thiouridylase of Plasmodium falciparum (isolate 3D7).